A 904-amino-acid chain; its full sequence is Pyrimidine pathway regulatory protein 1 (904 aa).

Residues 1-11 (MKQKKFNSKKS) show a composition bias toward basic residues. Positions 1–27 (MKQKKFNSKKSNRTDLSKRGDSPNIGI) are disordered. Residues 12–21 (NRTDLSKRGD) are compositionally biased toward basic and acidic residues. 6 residues coordinate Zn(2+): cysteine 34, cysteine 37, cysteine 44, cysteine 51, cysteine 54, and cysteine 61. Positions 34–61 (CKRCRLKKIKCDQEFPSCKRCAKLEVPC) form a DNA-binding region, zn(2)-C6 fungal-type. The disordered stretch occupies residues 883–904 (GNEGESSYDISKGKNSESGGIF).

Binds DNA as a homodimer.

Its subcellular location is the nucleus. Positive regulator of URA1 and URA3 expression. The protein is Pyrimidine pathway regulatory protein 1 (PPR1) of Saccharomyces cerevisiae (strain ATCC 204508 / S288c) (Baker's yeast).